Here is a 175-residue protein sequence, read N- to C-terminus: ATP synthase subunit b (175 aa).

Residues 14–34 (LNPNPGLIFWTALTFLIVLVI) form a helical membrane-spanning segment.

Belongs to the ATPase B chain family. In terms of assembly, F-type ATPases have 2 components, F(1) - the catalytic core - and F(0) - the membrane proton channel. F(1) has five subunits: alpha(3), beta(3), gamma(1), delta(1), epsilon(1). F(0) has four main subunits: a(1), b(2) and c(10-14). The alpha and beta chains form an alternating ring which encloses part of the gamma chain. F(1) is attached to F(0) by a central stalk formed by the gamma and epsilon chains, while a peripheral stalk is formed by the delta and b chains.

It localises to the cell inner membrane. In terms of biological role, f(1)F(0) ATP synthase produces ATP from ADP in the presence of a proton or sodium gradient. F-type ATPases consist of two structural domains, F(1) containing the extramembraneous catalytic core and F(0) containing the membrane proton channel, linked together by a central stalk and a peripheral stalk. During catalysis, ATP synthesis in the catalytic domain of F(1) is coupled via a rotary mechanism of the central stalk subunits to proton translocation. Its function is as follows. Component of the F(0) channel, it forms part of the peripheral stalk, linking F(1) to F(0). This is ATP synthase subunit b from Chlorobaculum tepidum (strain ATCC 49652 / DSM 12025 / NBRC 103806 / TLS) (Chlorobium tepidum).